Reading from the N-terminus, the 126-residue chain is Copper resistance protein C (126 aa).

Residues 1 to 24 form the signal peptide; that stretch reads MLLNRTSFVTLFAAGMLVSALAQA. Residue histidine 25 coordinates Cu(2+). Residues methionine 64, methionine 67, methionine 70, histidine 72, and methionine 75 each contribute to the Cu(+) site. Histidine 115 contacts Cu(2+).

The protein belongs to the CopC family. In terms of assembly, monomer.

It is found in the periplasm. Its activity is regulated as follows. The redox state of copper bound to CopC may act as a switch between the possible trafficking pathways of the metal ion. Copper-binding protein involved in copper resistance and homeostasis. Probably mediates copper resistance by sequestering the excess of copper in the periplasm. May act as a copper carrier in the oxidizing periplasmic space that exchanges either Cu(I) or Cu(II) with its putative partners CopA, CopB and CopD. This Pseudomonas syringae pv. tomato protein is Copper resistance protein C.